We begin with the raw amino-acid sequence, 102 residues long: UPF0213 protein XCC3072 (102 aa).

The GIY-YIG domain maps to 5 to 80; it reads KPWHLYLLLC…KQQPRARKLA (76 aa).

It belongs to the UPF0213 family.

This chain is UPF0213 protein XCC3072, found in Xanthomonas campestris pv. campestris (strain ATCC 33913 / DSM 3586 / NCPPB 528 / LMG 568 / P 25).